Reading from the N-terminus, the 187-residue chain is Structural protein ORF187 (187 aa).

A helical membrane pass occupies residues 65–85 (IYQPTAIAVSGVGGIIGALLA).

The protein localises to the host membrane. It is found in the virion. This Acidianus two-tailed virus (ATV) protein is Structural protein ORF187.